The primary structure comprises 892 residues: Exo-beta-D-glucosaminidase (892 aa).

A signal peptide spans 1–18; it reads MLANAIAALLLGSGIASA. The propeptide occupies 19–28; it reads AGHGSPLTSK. Asn196, Asn336, and Asn440 each carry an N-linked (GlcNAc...) asparagine glycan. The Proton donor role is filled by Asp464. Catalysis depends on Glu539, which acts as the Nucleophile. N-linked (GlcNAc...) asparagine glycans are attached at residues Asn557, Asn578, Asn689, and Asn825.

It belongs to the glycosyl hydrolase 2 family. In terms of assembly, monomer.

Its subcellular location is the secreted. It localises to the extracellular space. It carries out the reaction Hydrolysis of chitosan or chitosan oligosaccharides to remove successive D-glucosamine residues from the non-reducing termini.. In terms of biological role, hydrolyzes chitosan and chitooligosaccharides with retention of anomeric configuration. Has no activity against beta-D-galactoside, beta-D-glucuronide, beta-D-mannoside, chitin, glycol chitosan, cellulose, N,N'-diacetylchitibiose and pNP-GlcNAc. This chain is Exo-beta-D-glucosaminidase, found in Hypocrea jecorina (Trichoderma reesei).